The chain runs to 245 residues: MKVNAKSDHKLLPKVTKVVAKGDAKGKKVNKAWLHDHINDPYVKQARKEGYRARAAFKLKEMDETLGLIKPGDCVVDLGSTPGAWSQYVRRKLSPTGAAVGALNGRIIGLDLLPMEPIEGVVFIQGDFREPEVLAKLEQALSTEKGPVKVDLVISDMAPNLSGIESADAARIAHLVELAVEFAQTRMKPDGALVVKLFHGSGYDDLVKLFQASFKVVKRMKPKASRPNSSETFLVGRGLKNVTPV.

Residues glycine 83, tryptophan 85, aspartate 111, aspartate 127, and aspartate 156 each coordinate S-adenosyl-L-methionine. Lysine 196 functions as the Proton acceptor in the catalytic mechanism.

This sequence belongs to the class I-like SAM-binding methyltransferase superfamily. RNA methyltransferase RlmE family.

It is found in the cytoplasm. It carries out the reaction uridine(2552) in 23S rRNA + S-adenosyl-L-methionine = 2'-O-methyluridine(2552) in 23S rRNA + S-adenosyl-L-homocysteine + H(+). Specifically methylates the uridine in position 2552 of 23S rRNA at the 2'-O position of the ribose in the fully assembled 50S ribosomal subunit. This is Ribosomal RNA large subunit methyltransferase E from Polaromonas naphthalenivorans (strain CJ2).